The sequence spans 211 residues: Glutathione S-transferase class-mu 28 kDa isozyme (211 aa).

Ala-2 is subject to N-acetylalanine. Residues 4–86 (EHIKVIYFDG…YMAKKHHMMG (83 aa)) form the GST N-terminal domain. Glutathione-binding positions include Tyr-10, 10 to 11 (YF), Arg-16, 41 to 45 (WPKIK), Leu-53, 55 to 56 (AV), and 70 to 71 (ES). The GST C-terminal domain maps to 88–211 (TDEEYYSVEK…YLSNRPATPF (124 aa)).

The protein belongs to the GST superfamily. Mu family. In terms of assembly, homodimer. In the adult, expressed in excretory epithelial cells but absent from the caecal epithelium and flame cells. Also expressed in the tegument and its extensions into the parenchyma. In the schistosomulum, expressed in the tegument and associated structures. Not expressed in digestive tract, reproductive organs or muscles (at protein level).

It carries out the reaction RX + glutathione = an S-substituted glutathione + a halide anion + H(+). Its function is as follows. Conjugation of reduced glutathione to a wide number of exogenous and endogenous hydrophobic electrophiles. In terms of biological role, GST isoenzymes appear to play a central role in the parasite detoxification system. Other functions are also suspected including a role in increasing the solubility of haematin in the parasite gut. In Schistosoma mansoni (Blood fluke), this protein is Glutathione S-transferase class-mu 28 kDa isozyme (GST28).